We begin with the raw amino-acid sequence, 138 residues long: Putative pre-16S rRNA nuclease (138 aa).

The protein belongs to the YqgF nuclease family.

The protein localises to the cytoplasm. Its function is as follows. Could be a nuclease involved in processing of the 5'-end of pre-16S rRNA. This Caldicellulosiruptor bescii (strain ATCC BAA-1888 / DSM 6725 / KCTC 15123 / Z-1320) (Anaerocellum thermophilum) protein is Putative pre-16S rRNA nuclease.